A 153-amino-acid chain; its full sequence is NAD(P)H-quinone oxidoreductase subunit N (153 aa).

This sequence belongs to the complex I NdhN subunit family. In terms of assembly, NDH-1 can be composed of about 15 different subunits; different subcomplexes with different compositions have been identified which probably have different functions.

The protein resides in the cellular thylakoid membrane. The catalysed reaction is a plastoquinone + NADH + (n+1) H(+)(in) = a plastoquinol + NAD(+) + n H(+)(out). It carries out the reaction a plastoquinone + NADPH + (n+1) H(+)(in) = a plastoquinol + NADP(+) + n H(+)(out). Functionally, NDH-1 shuttles electrons from an unknown electron donor, via FMN and iron-sulfur (Fe-S) centers, to quinones in the respiratory and/or the photosynthetic chain. The immediate electron acceptor for the enzyme in this species is believed to be plastoquinone. Couples the redox reaction to proton translocation, and thus conserves the redox energy in a proton gradient. Cyanobacterial NDH-1 also plays a role in inorganic carbon-concentration. The protein is NAD(P)H-quinone oxidoreductase subunit N of Prochlorococcus marinus (strain MIT 9211).